Reading from the N-terminus, the 433-residue chain is Succinate--CoA ligase [GDP-forming] subunit beta, mitochondrial (433 aa).

The N-terminal 38 residues, 1 to 38, are a transit peptide targeting the mitochondrion; the sequence is MASPVAIAAQAGKLLRERALRPLLAVRSQAGHLTPRRW. The ATP-grasp domain maps to 47-275; it reads KKLMSEHGVR…NAEFRQKDIF (229 aa). Glutamine 58 contacts GTP. Lysine 67 carries the N6-acetyllysine; alternate modification. Lysine 67 is subject to N6-succinyllysine; alternate. At lysine 74 the chain carries N6-acetyllysine. Lysine 79 bears the N6-succinyllysine mark. A GTP-binding site is contributed by 91 to 93; the sequence is GRG. Residues lysine 112, lysine 133, and lysine 140 each carry the N6-acetyllysine modification. Leucine 147 is a binding site for GTP. Serine 162 bears the Phosphoserine mark. The residue at position 201 (lysine 201) is an N6-acetyllysine. Serine 217 carries the post-translational modification Phosphoserine. An N6-acetyllysine mark is found at lysine 219 and lysine 228. Residues asparagine 244 and aspartate 258 each contribute to the Mg(2+) site. Lysine 272 carries the post-translational modification N6-acetyllysine. Asparagine 309 lines the substrate pocket. The residue at position 339 (lysine 339) is an N6-succinyllysine. Lysine 348 is subject to N6-acetyllysine. 366–368 lines the substrate pocket; it reads GIV. N6-acetyllysine occurs at positions 387, 407, and 424.

It belongs to the succinate/malate CoA ligase beta subunit family. GTP-specific subunit beta subfamily. In terms of assembly, heterodimer of an alpha and a beta subunit. The beta subunit determines specificity for GTP. Requires Mg(2+) as cofactor.

The protein resides in the mitochondrion. It carries out the reaction GTP + succinate + CoA = succinyl-CoA + GDP + phosphate. It functions in the pathway carbohydrate metabolism; tricarboxylic acid cycle; succinate from succinyl-CoA (ligase route): step 1/1. Its function is as follows. GTP-specific succinyl-CoA synthetase functions in the citric acid cycle (TCA), coupling the hydrolysis of succinyl-CoA to the synthesis of GTP and thus represents the only step of substrate-level phosphorylation in the TCA. The beta subunit provides nucleotide specificity of the enzyme and binds the substrate succinate, while the binding sites for coenzyme A and phosphate are found in the alpha subunit. The protein is Succinate--CoA ligase [GDP-forming] subunit beta, mitochondrial of Mus musculus (Mouse).